The sequence spans 213 residues: Ribonuclease T (213 aa).

Positions 28–202 (VVVDVETGGF…YDTEQTARLF (175 aa)) constitute an Exonuclease domain. Positions 31, 33, 189, and 194 each coordinate Mg(2+). The active-site Proton donor/acceptor is the H189.

The protein belongs to the RNase T family. In terms of assembly, homodimer. It depends on Mg(2+) as a cofactor.

Trims short 3' overhangs of a variety of RNA species, leaving a one or two nucleotide 3' overhang. Responsible for the end-turnover of tRNA: specifically removes the terminal AMP residue from uncharged tRNA (tRNA-C-C-A). Also appears to be involved in tRNA biosynthesis. This chain is Ribonuclease T, found in Xanthomonas euvesicatoria pv. vesicatoria (strain 85-10) (Xanthomonas campestris pv. vesicatoria).